The sequence spans 179 residues: Large ribosomal subunit protein uL5 (179 aa).

The protein belongs to the universal ribosomal protein uL5 family. Part of the 50S ribosomal subunit; part of the 5S rRNA/L5/L18/L25 subcomplex. Contacts the 5S rRNA and the P site tRNA. Forms a bridge to the 30S subunit in the 70S ribosome.

In terms of biological role, this is one of the proteins that bind and probably mediate the attachment of the 5S RNA into the large ribosomal subunit, where it forms part of the central protuberance. In the 70S ribosome it contacts protein S13 of the 30S subunit (bridge B1b), connecting the 2 subunits; this bridge is implicated in subunit movement. Contacts the P site tRNA; the 5S rRNA and some of its associated proteins might help stabilize positioning of ribosome-bound tRNAs. The sequence is that of Large ribosomal subunit protein uL5 from Erwinia tasmaniensis (strain DSM 17950 / CFBP 7177 / CIP 109463 / NCPPB 4357 / Et1/99).